The primary structure comprises 986 residues: Ephrin type-B receptor 2 (986 aa).

A signal peptide spans 1 to 18 (MAVRRLGAALLLLPLLAA). Topologically, residues 19–543 (VEETLMDSTT…QTSIKEKLPL (525 aa)) are extracellular. An Eph LBD domain is found at 20 to 202 (EETLMDSTTA…FYRKCPRIIQ (183 aa)). 2 cysteine pairs are disulfide-bonded: cysteine 62–cysteine 184 and cysteine 97–cysteine 107. Asparagine 265, asparagine 336, asparagine 428, and asparagine 482 each carry an N-linked (GlcNAc...) asparagine glycan. 2 Fibronectin type-III domains span residues 324-434 (IPSA…TNQA) and 435-530 (APSA…TMTE). The chain crosses the membrane as a helical span at residues 544-564 (IVGSSAAGLVFLIAVVVIAIV). The Cytoplasmic segment spans residues 565–986 (CNRRGFERAD…QMNQIQSVEV (422 aa)). A Protein kinase domain is found at 621-884 (VKIEQVIGAG…QIVNTLDKMI (264 aa)). ATP-binding positions include 627 to 635 (IGAGEFGEV) and lysine 653. Aspartate 746 acts as the Proton acceptor in catalysis. Lysine 891 is covalently cross-linked (Glycyl lysine isopeptide (Lys-Gly) (interchain with G-Cter in ubiquitin)). The SAM domain maps to 913–977 (TSFNTVDEWL…LNSIQVMRAQ (65 aa)). The short motif at 984–986 (VEV) is the PDZ-binding element.

It belongs to the protein kinase superfamily. Tyr protein kinase family. Ephrin receptor subfamily. Heterotetramer upon binding of the ligand. The heterotetramer is composed of an ephrin dimer and a receptor dimer. Interacts (via PDZ-binding motif) with GRIP1 and PICK1 (via PDZ domain). Interacts with ARHGEF15; mediates ARHGEF15 phosphorylation, ubiquitination and degradation by the proteasome. Interacts with AQP1; involved in endolymph production in the inner ear. Interacts with EFNA5. Interacts with SPSB1. Interacts with SPSB4. Interacts with SH2D3C. In terms of processing, autophosphorylated; ligand binding stimulates autophosphorylation on tyrosine residues. Ligand binding induces cleavage by matrix metalloproteinases (MMPs) such as MMP7/MMP9, producing an EphB2/N-terminal fragment (NTF) and a C-terminal long fragment (EphB2-LF). EphB2-LF is further cleaved by MMPs, producing EphB2/CTF1 which is further cleaved by the PS1/gamma-secretase producing EphB2/CTF2. Post-translationally, polyubiquitinated; ligand binding stimulates ubiquitination. Ubiquitinated by RNF186 at Lys-891, mainly through 'Lys-27'-linked polyubiquitin chains. Ubiquitinated by CRL2(KLHDC2) E3 ligase complex. As to expression, expressed in the epithelial dark cells of the inner ear. Expressed in the region of the proximal tubules of the kidney nephron. Expressed in myogenic progenitor cells.

The protein localises to the cell membrane. Its subcellular location is the cell projection. The protein resides in the axon. It is found in the dendrite. The enzyme catalyses L-tyrosyl-[protein] + ATP = O-phospho-L-tyrosyl-[protein] + ADP + H(+). Receptor tyrosine kinase which binds promiscuously transmembrane ephrin-B family ligands residing on adjacent cells, leading to contact-dependent bidirectional signaling into neighboring cells. The signaling pathway downstream of the receptor is referred to as forward signaling while the signaling pathway downstream of the ephrin ligand is referred to as reverse signaling. Functions in axon guidance during development. Involved in the guidance of commissural axons, that form a major interhemispheric connection between the 2 temporal lobes of the cerebral cortex. Also involved in guidance of contralateral inner ear efferent growth cones at the midline and of retinal ganglion cell axons to the optic disk. In addition to axon guidance, also regulates dendritic spines development and maturation and stimulates the formation of excitatory synapses. Upon activation by EFNB1, abolishes the ARHGEF15-mediated negative regulation on excitatory synapse formation. Controls other aspects of development including angiogenesis, palate development and in inner ear development through regulation of endolymph production. Forward and reverse signaling through the EFNB2/EPHB2 complex regulate movement and adhesion of cells that tubularize the urethra and septate the cloaca. May function as a tumor suppressor. May be involved in the regulation of platelet activation and blood coagulation. This is Ephrin type-B receptor 2 from Mus musculus (Mouse).